The sequence spans 228 residues: Phosphoribosylformylglycinamidine synthase subunit PurQ (228 aa).

A Glutamine amidotransferase type-1 domain is found at 3-226; sequence FAVVVFPGSN…VTYWRDAHVV (224 aa). Catalysis depends on C86, which acts as the Nucleophile. Active-site residues include H195 and E197.

As to quaternary structure, part of the FGAM synthase complex composed of 1 PurL, 1 PurQ and 2 PurS subunits.

Its subcellular location is the cytoplasm. It catalyses the reaction N(2)-formyl-N(1)-(5-phospho-beta-D-ribosyl)glycinamide + L-glutamine + ATP + H2O = 2-formamido-N(1)-(5-O-phospho-beta-D-ribosyl)acetamidine + L-glutamate + ADP + phosphate + H(+). It carries out the reaction L-glutamine + H2O = L-glutamate + NH4(+). It participates in purine metabolism; IMP biosynthesis via de novo pathway; 5-amino-1-(5-phospho-D-ribosyl)imidazole from N(2)-formyl-N(1)-(5-phospho-D-ribosyl)glycinamide: step 1/2. In terms of biological role, part of the phosphoribosylformylglycinamidine synthase complex involved in the purines biosynthetic pathway. Catalyzes the ATP-dependent conversion of formylglycinamide ribonucleotide (FGAR) and glutamine to yield formylglycinamidine ribonucleotide (FGAM) and glutamate. The FGAM synthase complex is composed of three subunits. PurQ produces an ammonia molecule by converting glutamine to glutamate. PurL transfers the ammonia molecule to FGAR to form FGAM in an ATP-dependent manner. PurS interacts with PurQ and PurL and is thought to assist in the transfer of the ammonia molecule from PurQ to PurL. This chain is Phosphoribosylformylglycinamidine synthase subunit PurQ, found in Anoxybacillus flavithermus (strain DSM 21510 / WK1).